Reading from the N-terminus, the 118-residue chain is Putative pterin-4-alpha-carbinolamine dehydratase (118 aa).

Belongs to the pterin-4-alpha-carbinolamine dehydratase family.

It carries out the reaction (4aS,6R)-4a-hydroxy-L-erythro-5,6,7,8-tetrahydrobiopterin = (6R)-L-erythro-6,7-dihydrobiopterin + H2O. This chain is Putative pterin-4-alpha-carbinolamine dehydratase, found in Pseudomonas putida (strain ATCC 700007 / DSM 6899 / JCM 31910 / BCRC 17059 / LMG 24140 / F1).